The sequence spans 523 residues: Asparagine--tRNA ligase (523 aa).

The segment at 329–350 is disordered; the sequence is SARGDTPLAARSTARTPPVRTP.

This sequence belongs to the class-II aminoacyl-tRNA synthetase family. Homodimer.

It is found in the cytoplasm. It carries out the reaction tRNA(Asn) + L-asparagine + ATP = L-asparaginyl-tRNA(Asn) + AMP + diphosphate + H(+). This chain is Asparagine--tRNA ligase, found in Treponema pallidum (strain Nichols).